We begin with the raw amino-acid sequence, 149 residues long: Nucleoside diphosphate kinase (149 aa).

Lysine 9, phenylalanine 57, arginine 85, threonine 91, arginine 102, and asparagine 112 together coordinate ATP. Histidine 115 acts as the Pros-phosphohistidine intermediate in catalysis.

It belongs to the NDK family. As to quaternary structure, homotetramer. The cofactor is Mg(2+).

The protein resides in the cytoplasm. The catalysed reaction is a 2'-deoxyribonucleoside 5'-diphosphate + ATP = a 2'-deoxyribonucleoside 5'-triphosphate + ADP. It catalyses the reaction a ribonucleoside 5'-diphosphate + ATP = a ribonucleoside 5'-triphosphate + ADP. Functionally, major role in the synthesis of nucleoside triphosphates other than ATP. The ATP gamma phosphate is transferred to the NDP beta phosphate via a ping-pong mechanism, using a phosphorylated active-site intermediate. The protein is Nucleoside diphosphate kinase of Desulfitobacterium hafniense (strain DSM 10664 / DCB-2).